A 1071-amino-acid polypeptide reads, in one-letter code: DNA-directed RNA polymerase subunit beta (1071 aa).

Belongs to the RNA polymerase beta chain family. In terms of assembly, in plastids the minimal PEP RNA polymerase catalytic core is composed of four subunits: alpha, beta, beta', and beta''. When a (nuclear-encoded) sigma factor is associated with the core the holoenzyme is formed, which can initiate transcription.

It localises to the plastid. Its subcellular location is the chloroplast. The catalysed reaction is RNA(n) + a ribonucleoside 5'-triphosphate = RNA(n+1) + diphosphate. DNA-dependent RNA polymerase catalyzes the transcription of DNA into RNA using the four ribonucleoside triphosphates as substrates. In Drimys granadensis, this protein is DNA-directed RNA polymerase subunit beta.